Reading from the N-terminus, the 326-residue chain is Aldo-keto reductase family 1 member D1 (326 aa).

NADP(+)-binding positions include 22-26 and aspartate 53; that span reads GLGTY. Residue tyrosine 26 participates in substrate binding. Residues tyrosine 58, tryptophan 89, glutamate 120, and tyrosine 132 each coordinate substrate. Residue tyrosine 58 is the Proton donor of the active site. Residues 169–170, glutamine 193, and 219–224 contribute to the NADP(+) site; these read SN and YSPLGT. Tryptophan 230 contributes to the substrate binding site. 273 to 283 is a binding site for NADP(+); it reads KSFNPERIKEN.

This sequence belongs to the aldo/keto reductase family.

The protein localises to the cytoplasm. The catalysed reaction is 5beta-cholestan-3-one + NADP(+) = cholest-4-en-3-one + NADPH + H(+). It carries out the reaction 4,5beta-dihydrocortisone + NADP(+) = cortisone + NADPH + H(+). It catalyses the reaction cortisol + NADPH + H(+) = 5beta-dihydrocortisol + NADP(+). The enzyme catalyses corticosterone + NADPH + H(+) = 5beta-dihydrocorticosterone + NADP(+). The catalysed reaction is 7alpha,12alpha-dihydroxycholest-4-en-3-one + NADPH + H(+) = 7alpha,12alpha-dihydroxy-5beta-cholestan-3-one + NADP(+). It carries out the reaction 7alpha-hydroxycholest-4-en-3-one + NADPH + H(+) = 7alpha-hydroxy-5beta-cholestan-3-one + NADP(+). It catalyses the reaction epitestosterone + NADPH + H(+) = 5beta-dihydroepitestosterone + NADP(+). The enzyme catalyses androst-4-ene-3,17-dione + NADPH + H(+) = 5beta-androstane-3,17-dione + NADP(+). The catalysed reaction is progesterone + NADPH + H(+) = 5beta-pregnan-3,20-dione + NADP(+). It carries out the reaction 21-hydroxyprogesterone + NADPH + H(+) = 5beta-dihydrodeoxycorticosterone + NADP(+). It catalyses the reaction aldosterone + NADPH + H(+) = 5beta-dihydroaldosterone + NADP(+). The enzyme catalyses 17beta-hydroxyandrosta-1,4-dien-3-one + NADPH + H(+) = 17beta-hydroxy-5beta-androst-1-en-3-one + NADP(+). The catalysed reaction is 17beta-hydroxyestr-4-en-3-one + NADPH + H(+) = 17beta-hydroxy-5beta-estran-3-one + NADP(+). It carries out the reaction 5beta-dihydrotestosterone + NADP(+) = testosterone + NADPH + H(+). It catalyses the reaction androst-4-ene-3,11,17-trione + NADPH + H(+) = 17beta-hydroxyandrost-4-ene-3,11-dione + NADP(+). Its activity is regulated as follows. Subject to inhibition by high substrate concentrations. Inhibited by testosterone concentrations above 10 uM. Inhibited by the primary and secondary bile acids chenodeoxycholic acid and ursodeoxycholic acid. Functionally, catalyzes the stereospecific NADPH-dependent reduction of the C4-C5 double bond of bile acid intermediates and steroid hormones carrying a delta(4)-3-one structure to yield an A/B cis-ring junction. This cis-configuration is crucial for bile acid biosynthesis and plays important roles in steroid metabolism. Capable of reducing a broad range of delta-(4)-3-ketosteroids from C18 (such as, 17beta-hydroxyestr-4-en-3-one) to C27 (such as, 7alpha-hydroxycholest-4-en-3-one). The chain is Aldo-keto reductase family 1 member D1 (AKR1D1) from Oryctolagus cuniculus (Rabbit).